The following is a 60-amino-acid chain: Large ribosomal subunit protein bL32 (60 aa).

Residues 1 to 16 (MAVPKKKTSKSRKNMR) show a composition bias toward basic residues. Residues 1-20 (MAVPKKKTSKSRKNMRRAHD) form a disordered region.

It belongs to the bacterial ribosomal protein bL32 family.

The protein is Large ribosomal subunit protein bL32 of Geobacter metallireducens (strain ATCC 53774 / DSM 7210 / GS-15).